The following is a 229-amino-acid chain: MSSLKKILGLKGKGKKSKKLGIAPPPYEEDTSMEYAPSAPIDKSYFGVDEMDTYDPNQLRYEKFFFTVKMTVRSNRPFRTYSDVAAAVSHWDHMYIGMAGKRPFYKILAFLGSSNLKATPAVLADQGQPEYHTHCEGRAYLPHRMGKTPPMLNVPEHFRRPFNIGLYKGTIELTMTIYDDESLEAAPMIWDHFNSSKFSDFREKALMFGLIVEKKASGAWVLDSISHFK.

Residues Met-1–Leu-10 show a composition bias toward low complexity. Residues Met-1 to Ala-23 are disordered. The short motif at Ser-2–Leu-4 is the dynamin binding element. Residues Pro-24–Tyr-27 carry the PPXY motif motif. A PTAP/PSAP motif motif is present at residues Pro-37–Pro-40.

The protein belongs to the vesiculoviruses matrix protein family. As to quaternary structure, homomultimer. Interacts with viral nucleocapsid; this interaction contributes to the virion assembly. Interacts with the viral envelope glycoprotein; this interaction contributes to the virion assembly. Interacts with host RAE1-NUP98 complex. Interacts with host NEDD4 and TSG101. Interacts with host dynamin. Interacts with host NDUFAF4; the interaction inhibits viral propagation and is independent of interferon activation. Interacts with host GTF2H5; the interaction may inhibit host transcription. Post-translationally, phosphorylated by host.

The protein localises to the virion. It localises to the host endomembrane system. Its subcellular location is the host nucleus membrane. The protein resides in the host nucleus. It is found in the host cytoplasm. Functionally, forms a double layer around the helical nucleocapsid, the inner matrix layer binding to the N helix and the outer matrix layer binding to the envelope glycoprotein. Plays a major role in assembly and budding of virion, by recruiting cellular partners of the ESCRT complexes that play a key role in releasing the budding particle from the host membrane. Condensates the ribonucleocapsid core during virus assembly. Inhibits the host mRNA nuclear export thereby inducing the shut off of cellular transcription and preventing the interferon signaling and the establishment of antiviral state in infected cells. This shutoff presumably inhibits interferon signaling and thus establishment of antiviral state in virus infected cells. Induces cell-rounding, cytoskeleton disorganization and apoptosis in infected cell. Inhibits host transcription, possibly through interaction with host DNA repair factor IIH/TFIIH GTF2H5 subunit. This chain is Matrix protein (M), found in Vesicular stomatitis Indiana virus (strain San Juan) (VSIV).